The primary structure comprises 296 residues: Tyrosine recombinase XerC (296 aa).

The 84-residue stretch at 1 to 84 (MEKIQQAYLY…TLRSFYEYWM (84 aa)) folds into the Core-binding (CB) domain. One can recognise a Tyr recombinase domain in the interval 105–286 (YLPHFFYEEE…TNEQLRKVYL (182 aa)). Catalysis depends on residues arginine 145, lysine 169, histidine 238, arginine 241, and histidine 264. The O-(3'-phospho-DNA)-tyrosine intermediate role is filled by tyrosine 273.

It belongs to the 'phage' integrase family. XerC subfamily. Forms a cyclic heterotetrameric complex composed of two molecules of XerC and two molecules of XerD.

The protein resides in the cytoplasm. Functionally, site-specific tyrosine recombinase, which acts by catalyzing the cutting and rejoining of the recombining DNA molecules. The XerC-XerD complex is essential to convert dimers of the bacterial chromosome into monomers to permit their segregation at cell division. It also contributes to the segregational stability of plasmids. The polypeptide is Tyrosine recombinase XerC (Staphylococcus saprophyticus subsp. saprophyticus (strain ATCC 15305 / DSM 20229 / NCIMB 8711 / NCTC 7292 / S-41)).